Consider the following 215-residue polypeptide: Adenylate kinase (215 aa).

Residue 10–15 (GAGKGT) coordinates ATP. An NMP region spans residues 30–59 (STGDMFRAAMKNNTELGRKAKSFMDNGDLV). Residues T31, R36, 57 to 59 (DLV), 85 to 88 (GFPR), and Q92 contribute to the AMP site. Residues 126–163 (GRWICRTCGKTYHEIYNPPKVAGKCDLDGGELYQRDDD) are LID. An ATP-binding site is contributed by R127. Residues C130 and C133 each coordinate Zn(2+). 136 to 137 (TY) serves as a coordination point for ATP. Residues C150 and D153 each contribute to the Zn(2+) site. AMP is bound by residues R160 and R171. Residue Q199 coordinates ATP.

It belongs to the adenylate kinase family. Monomer.

The protein localises to the cytoplasm. It carries out the reaction AMP + ATP = 2 ADP. It participates in purine metabolism; AMP biosynthesis via salvage pathway; AMP from ADP: step 1/1. Its function is as follows. Catalyzes the reversible transfer of the terminal phosphate group between ATP and AMP. Plays an important role in cellular energy homeostasis and in adenine nucleotide metabolism. The polypeptide is Adenylate kinase (Listeria monocytogenes serotype 4a (strain HCC23)).